The sequence spans 479 residues: Glycogen synthase (479 aa).

Lys-16 contacts ADP-alpha-D-glucose.

Belongs to the glycosyltransferase 1 family. Bacterial/plant glycogen synthase subfamily.

The catalysed reaction is [(1-&gt;4)-alpha-D-glucosyl](n) + ADP-alpha-D-glucose = [(1-&gt;4)-alpha-D-glucosyl](n+1) + ADP + H(+). It participates in glycan biosynthesis; glycogen biosynthesis. Functionally, synthesizes alpha-1,4-glucan chains using ADP-glucose. In Lactiplantibacillus plantarum (strain ATCC BAA-793 / NCIMB 8826 / WCFS1) (Lactobacillus plantarum), this protein is Glycogen synthase.